A 171-amino-acid chain; its full sequence is Putative phosphoesterase BPUM_1117 (171 aa).

Histidine 34 (proton donor) is an active-site residue. Short sequence motifs (HXTX) lie at residues 34–37 (HLTL) and 115–118 (HVTV). Residue histidine 115 is the Proton acceptor of the active site.

It belongs to the 2H phosphoesterase superfamily. YjcG family.

The chain is Putative phosphoesterase BPUM_1117 from Bacillus pumilus (strain SAFR-032).